Consider the following 463-residue polypeptide: MTKNKSKNKSNNSNISNNNNNNNNNNNNNNNNNNNNNNNNNNNNNNNNNNNNNNNNKNGESQLKNKNKNISENQHIYDKHNHDHSHDHNHDYDDNNEDDEEKEELEHYQLIVSTLLNYSQYSLHWVKDMQDFFHYKLSEDEKKLLPNYNAKMEALARAVLVNSQFLKKIGNEHCNIFSQSSDNSANSERIVDPTNLDHIKIDYFMMDQLKSTIRQLVREWSEEGKLERDQAFEPIKQQLLEIYGHIPFQERSKIRVYSPGAGLGRLCLEIASLGFSSQGIEYSFMMLIVSNFMLNKVEKINEFKIHPYIHQTVNVLRDIDQLRTVTIPDVLSSELLPKNNPALEFSMSAGDFTKNIEENSFDCICTCFFIDTAPNILEYVDCISKILKPGGTWINFGPLLYHHAKKKDSIELSYEQLRYLICKKQFQFKKEEIRDAEYCSNQKSLLRSIYKCQFFVVINNKPT.

Disordered regions lie at residues 1–64 (MTKN…SQLK) and 79–104 (KHNH…EKEE). Residues 9–58 (KSNNSNISNNNNNNNNNNNNNNNNNNNNNNNNNNNNNNNNNNNNNNNNKN) are compositionally biased toward low complexity. The segment covering 79–93 (KHNHDHSHDHNHDYD) has biased composition (basic and acidic residues). The span at 94–103 (DNNEDDEEKE) shows a compositional bias: acidic residues. The S-adenosyl-L-methionine site is built by Gln-215, Arg-218, Gly-260, Glu-281, Asp-351, Phe-352, and Cys-367. Residue Asp-371 participates in carnosine binding. Tyr-379 provides a ligand contact to S-adenosyl-L-methionine. His-402 and Tyr-450 together coordinate carnosine.

Belongs to the carnosine N-methyltransferase family.

The enzyme catalyses carnosine + S-adenosyl-L-methionine = anserine + S-adenosyl-L-homocysteine + H(+). Its function is as follows. N-methyltransferase that mediates the formation of anserine (beta-alanyl-N(Pi)-methyl-L-histidine) from carnosine. The protein is Carnosine N-methyltransferase of Dictyostelium discoideum (Social amoeba).